The primary structure comprises 303 residues: uncharacterized protein (303 aa).

This is an uncharacterized protein from Magallana gigas (Pacific oyster).